A 570-amino-acid polypeptide reads, in one-letter code: MAADIFSKFKKDMEVKFAQEFGSNKQTGGDITDKTAKFLRLGPEQDPRKVEMIKAGKEIAEKRGIAFYNPMMHSGAPLGQRAITPYTISGTDIVCEPDDLHYVNNAAMQQMWDDIRRTCIVGLDMAHETLEKRLGKEVTPETINHYLEVLNHAMPGAAVVQEMMVETHPALVDDCYVKVFTGDDALADEIDKQFLIDINKEFSEEQAAQIKASIGKTSWQAIHIPTIVSRTTDGAQTSRWAAMQIGMSFISAYAMCAGEAAVADLSFAAKHAALVSMGEMLPARRARGPNEPGGLSFGHLSDIVQTSRVSEDPAKIALEVVGAGCMLYDQIWLGSYMSGGVGFTQYATAAYTDDILDNNTYYDVDYINDKYNGAATVGKDNKVKASLEVVKDIATESTLYGIETYEKFPTALEDHFGGSQRATVLAAAAGVACSLATGNANAGLSGWYLSMYLHKEAWGRLGFFGFDLQDQCGATNVLSYQGDEGLPDELRGPNYPNYAMNVGHQGGYAGIAQAAHSGRGDAFTVNPLLKVCFADDLLPFNFAEPRREFGRGAIREFVPAGERSLVIPAK.

Q161 is a coenzyme F430 binding site. Residues R239, 270–271 (KH), and R284 each bind coenzyme B. H271 carries the pros-methylhistidine modification. At R285 the chain carries 5-methylarginine. Y346 and F464 together coordinate coenzyme M. A 1-thioglycine modification is found at G465. At D470 the chain carries (Z)-2,3-didehydroaspartate. Residue C472 is modified to S-methylcysteine.

This sequence belongs to the methyl-coenzyme M reductase alpha subunit family. As to quaternary structure, MCR is a hexamer of two alpha, two beta, and two gamma chains, forming a dimer of heterotrimers. Requires coenzyme F430 as cofactor. In terms of processing, the alpha subunit contains five modified amino acids near the active site region. Is methylated on His-271, Arg-285 and Cys-472, probably by the action of specific S-adenosylmethionine-dependent methyltransferases. Also contains a thioglycine at position 465, forming a thiopeptide bond. Contains a didehydroaspartate residue at position 470. The methylation on C5 of Arg-285 is a post-translational methylation not essential in vivo, but which plays a role for the stability and structural integrity of MCR. Does not show a methylation at Gln-420, as shown for M.marburgensis.

It is found in the cytoplasm. The catalysed reaction is coenzyme B + methyl-coenzyme M = methane + coenzyme M-coenzyme B heterodisulfide. The protein operates within one-carbon metabolism; methyl-coenzyme M reduction; methane from methyl-coenzyme M: step 1/1. In terms of biological role, component of the methyl-coenzyme M reductase (MCR) I that catalyzes the reductive cleavage of methyl-coenzyme M (CoM-S-CH3 or 2-(methylthio)ethanesulfonate) using coenzyme B (CoB or 7-mercaptoheptanoylthreonine phosphate) as reductant which results in the production of methane and the mixed heterodisulfide of CoB and CoM (CoM-S-S-CoB). This is the final step in methanogenesis. The protein is Methyl-coenzyme M reductase subunit alpha (mcrA) of Methanosarcina barkeri (strain Fusaro / DSM 804).